Here is a 2131-residue protein sequence, read N- to C-terminus: Beta/gamma crystallin domain-containing protein 1 (2131 aa).

Disordered stretches follow at residues 1–53, 104–370, 385–674, 688–707, and 723–743; these read MPLS…LPAP, KSRA…KGHA, TEGA…PVHK, RTNSSPRHTDIRGQRNTPAS, and AKEMEQPEKKVMPNSPQNGVL. Residues 19–35 show a composition bias toward basic residues; that stretch reads PPKKHTTFHLWRSKKKQ. Residues 135-147 show a composition bias toward polar residues; sequence RNGLESPTRSNAK. Basic and acidic residues-rich tracts occupy residues 160–169 and 184–194; these read LPERESERSR and GSPRENPREAE. Residues 248–265 show a composition bias toward polar residues; the sequence is ATTTAKQLHSSPGNSSRQ. Residues 414 to 424 are compositionally biased toward basic residues; that stretch reads SGRRSGRRRGS. Over residues 479–490 the composition is skewed to low complexity; sequence ASAASPESKPSP. Ser-483 and Ser-489 each carry phosphoserine. Basic and acidic residues-rich tracts occupy residues 536 to 546 and 562 to 572; these read PAKESPPKRVP and EAARAIPRELP. A compositionally biased stretch (low complexity) spans 609–619; it reads RAAGAPGASDA. Residues 723–733 show a composition bias toward basic and acidic residues; that stretch reads AKEMEQPEKKV. Ser-737 and Ser-756 each carry phosphoserine. Disordered regions lie at residues 758–791 and 837–889; these read EEILPATRGMNGDSSENQALGPQPNQDDKADVQT and DIPT…KDTC. A compositionally biased stretch (polar residues) spans 769–782; sequence GDSSENQALGPQPN. Over residues 864–881 the composition is skewed to low complexity; it reads SPAESSPGPSLSLSAPAP. Ser-892 is modified (phosphoserine). 4 disordered regions span residues 926–947, 1041–1101, 1271–1302, and 1316–1348; these read LELGGETTPPLSTERSPEAVGS, QAQS…VFDS, STSQNGSLSQSSVSQPTTEGAPPCGLNKEQSN, and SSSTSHSSLKSPSHMEKYPQKEKTKEDLDSRSN. At Thr-933 the chain carries Phosphothreonine. The segment covering 1055 to 1089 has biased composition (polar residues); it reads SSPTNSPSSGNHLATPQRPDQTVTNGQDSPASLLN. Low complexity-rich tracts occupy residues 1091-1101, 1271-1288, and 1316-1327; these read SAGSDDSVFDS, STSQNGSLSQSSVSQPTT, and SSSTSHSSLKSP. Residues 1328–1348 are compositionally biased toward basic and acidic residues; the sequence is SHMEKYPQKEKTKEDLDSRSN. Beta/gamma crystallin 'Greek key' domains are found at residues 1430–1469, 1470–1525, 1531–1571, 1572–1614, 1626–1678, 1679–1721, 1727–1769, 1770–1812, 1823–1860, 1861–1904, 1910–1950, and 1951–1992; these read GKVVIYSEPDVSEKCIEVFSDIQDCSSWSLSPVILIKVVR, GCWI…RHVV, SHID…KVHW, GTWL…RPLK, PKVV…KVLR, GIWV…RPIL, AHMI…NVLS, GVWV…QPIC, NQIHLFSEPQFQGHSQSFEETTSQIDDSFSTKSCRVSG, GSWV…RFID, PTII…QVIG, and GIWV…RPFV. A Ricin B-type lectin domain is found at 1994–2127; that stretch reads KRIYFRLRNK…EKFTQVWEAM (134 aa).

This sequence belongs to the beta/gamma-crystallin family.

May function as suppressor of malignant melanoma. It may exert its effects through interactions with the cytoskeleton. The protein is Beta/gamma crystallin domain-containing protein 1 of Homo sapiens (Human).